A 327-amino-acid polypeptide reads, in one-letter code: Small ribosomal subunit protein uS2 (327 aa).

Positions 258–327 (AGHTPVSETL…PGVADGAALE (70 aa)) are disordered.

This sequence belongs to the universal ribosomal protein uS2 family.

The polypeptide is Small ribosomal subunit protein uS2 (Anaplasma marginale (strain St. Maries)).